A 297-amino-acid polypeptide reads, in one-letter code: B-lymphocyte antigen CD20 (297 aa).

At 1–56 (MTTPRNSVNGTFPAEPMKGPIAMQSGPKPLFRRMSSLVGPTQSFFMRESKTLGAVQ) the chain is on the cytoplasmic side. At S36 the chain carries Phosphoserine. The chain crosses the membrane as a helical span at residues 57–78 (IMNGLFHIALGGLLMIPAGIYA). An epitope 1 region spans residues 74–80 (AGIYAPI). Over 79 to 84 (PICVTV) the chain is Extracellular. Residues 85 to 105 (WYPLWGGIMYIISGSLLAATE) form a helical membrane-spanning segment. The Cytoplasmic segment spans residues 106–120 (KNSRKCLVKGKMIMN). The S-palmitoyl cysteine moiety is linked to residue C111. Residues 121–141 (SLSLFAAISGMILSIMDILNI) form a helical membrane-spanning segment. Residues 142 to 188 (KISHFLKMESLNFIRAHTPYINIYNCEPANPSEKNSPSTQYCYSIQS) are Extracellular-facing. The epitope 2 stretch occupies residues 146-160 (FLKMESLNFIRAHTP). Residues C167 and C183 are joined by a disulfide bond. Positions 168–175 (EPANPSEK) are epitope 3 (recognized by antibodies, including Rituximab). Residues 189–209 (LFLGILSVMLIFAFFQELVIA) form a helical membrane-spanning segment. The Cytoplasmic segment spans residues 210 to 297 (GIVENEWKRT…SSPIENDSSP (88 aa)). The S-palmitoyl cysteine moiety is linked to residue C220. A Phosphoserine modification is found at S225. T239 is modified (phosphothreonine). A disordered region spans residues 247–297 (VGLTETSSQPKNEEDIEIIPIQEEEEEETETNFPEPPQDQESSPIENDSSP). Residues 260–276 (EDIEIIPIQEEEEEETE) are compositionally biased toward acidic residues. Over residues 285–297 (DQESSPIENDSSP) the composition is skewed to polar residues.

Belongs to the MS4A family. As to quaternary structure, forms homotetramers. Interacts with the heavy and light chains of cell surface IgM, the antigen-binding components of the BCR. In terms of processing, phosphorylated on serines and threonines in resting B-cells. Protein kinase C/PKC can use CD20 as substrate. As to expression, expressed on B-cells.

It is found in the cell membrane. Its function is as follows. B-lymphocyte-specific membrane protein that plays a role in the regulation of cellular calcium influx necessary for the development, differentiation, and activation of B-lymphocytes. Functions as a store-operated calcium (SOC) channel component promoting calcium influx after activation by the B-cell receptor/BCR. This chain is B-lymphocyte antigen CD20 (MS4A1), found in Homo sapiens (Human).